Reading from the N-terminus, the 273-residue chain is Pre-mRNA-splicing factor CWC23 (273 aa).

The 73-residue stretch at 15-87 (DLYALLEVSI…SLRATYNRWL (73 aa)) folds into the J domain.

The protein belongs to the DnaJ family. As to quaternary structure, associated with the spliceosome.

It is found in the cytoplasm. The protein localises to the nucleus. Its function is as follows. Involved in pre-mRNA splicing. May be involved in endoplasmic reticulum-associated protein degradation (ERAD) and required for growth at low and high temperatures. In Eremothecium gossypii (strain ATCC 10895 / CBS 109.51 / FGSC 9923 / NRRL Y-1056) (Yeast), this protein is Pre-mRNA-splicing factor CWC23 (CWC23).